We begin with the raw amino-acid sequence, 679 residues long: MSEARQILVTSALPYANGSIHLGHMLEYIQTDMWVRFQKLRGNQCIYVCADDAHGSAIMLRAEKEGITPEQLIANVQAEHSADFADFLVNFDNFHSTHSPENRELAELIYTRLRDAGHIATRSVTQYFDPEKGMFLADRFIKGTCPRCAAEDQYGDNCEKCGATYEPTELKDPRSAISGATPVLKDSKHFFFKLPDFEAMLKEWTRGGALQESVANKIAEWLDGGLQEWDISRDAPYFGFEIPGEPGKYFYVWLDAPIGYMASFQNLCKRRPELSFDAFWSKESSAELYHFIGKDIINFHTLFWPAMLEGAGFRKPTAVNVHGYLTVNGQKMSKSRGTFIKARTYLDHLNPEYLRYYYASKLGRGVDDLDLNLDDFVQKVNSDLVGKVVNIASRCAGFIHKGNDGVMVEANPEPELWAAFQAAAPSIADAYEARDFARAMREIMALADRANAWIADKAPWALNKVEGKQAEVQEICALGVNLFRQLVIFLKPVLPNLAAAAEQFLNVAPLSWDDHATLLANHKLNAFTPLMTRIEPAKIDAMIEASKEDLAASEAAVPAGNGELAKAPLAAEINFDTFAAVDLRIALIEKAEFVEGADKLLRLTLNIGDATRNVFSGIKSAYPDPSKLEGRLTLYVANLAPRKMKFGMSEGMVLAAGPGGSEIYLLSPDNGAKPGQRVM.

Residues 14–24 carry the 'HIGH' region motif; that stretch reads PYANGSIHLGH. Zn(2+)-binding residues include cysteine 145, cysteine 148, cysteine 158, and cysteine 161. The 'KMSKS' region motif lies at 331–335; the sequence is KMSKS. Lysine 334 contributes to the ATP binding site. The tRNA-binding domain occupies 577 to 679; the sequence is TFAAVDLRIA…NGAKPGQRVM (103 aa).

The protein belongs to the class-I aminoacyl-tRNA synthetase family. MetG type 1 subfamily. In terms of assembly, homodimer. Zn(2+) serves as cofactor.

It localises to the cytoplasm. The enzyme catalyses tRNA(Met) + L-methionine + ATP = L-methionyl-tRNA(Met) + AMP + diphosphate. In terms of biological role, is required not only for elongation of protein synthesis but also for the initiation of all mRNA translation through initiator tRNA(fMet) aminoacylation. The polypeptide is Methionine--tRNA ligase (Stutzerimonas stutzeri (strain A1501) (Pseudomonas stutzeri)).